Consider the following 219-residue polypeptide: Thiopurine S-methyltransferase (219 aa).

Trp10, Leu45, Glu66, and Arg123 together coordinate S-adenosyl-L-methionine.

The protein belongs to the class I-like SAM-binding methyltransferase superfamily. TPMT family.

Its subcellular location is the cytoplasm. It carries out the reaction S-adenosyl-L-methionine + a thiopurine = S-adenosyl-L-homocysteine + a thiopurine S-methylether.. This is Thiopurine S-methyltransferase from Bordetella pertussis (strain Tohama I / ATCC BAA-589 / NCTC 13251).